The chain runs to 413 residues: MKIYLVGGAVRDALLGLPVKDKDWVVVGATPEEMLNAGYQQVGRDFPVFLHPKTREEYALARTERKAGLGYTGFTCYAAPDVTLEQDLLRRDLTINALAQDDEGHIIDAYGGKRDLQNRLLRHVSPAFSEDPLRVLRVARFAARYAHLSFRIADETLALMTAMTAAGELEHLTPERVWKETENALTTRNPQVFFQVLRDCGALKVLFPEIDALFGVPAPAKWHPEIDTGIHTLMTLSMAAMLSPEVDVRFATLCHDLGKGLTPKEFWPRHHGHGPAGVKLVEGICQRLRVPNDIRDLAKLVAEFHDLIHTFPILKPATIVKLFDNIDAWRKPQRVEQIALTSEADVRGRTGFEACDYSQGRLLREAWEIAKAVPTKDVVEAGFKGPEIREELTKRRVQAVADWKEKRCPQPKD.

Residues G8 and R11 each coordinate ATP. CTP-binding residues include G8 and R11. Mg(2+)-binding residues include D21 and D23. Residues R91, R137, and R140 each coordinate ATP. Residues R91, R137, and R140 each contribute to the CTP site. An HD domain is found at 228 to 329; the sequence is TGIHTLMTLS…VKLFDNIDAW (102 aa).

This sequence belongs to the tRNA nucleotidyltransferase/poly(A) polymerase family. Bacterial CCA-adding enzyme type 1 subfamily. In terms of assembly, monomer. Can also form homodimers and oligomers. The cofactor is Mg(2+). Requires Ni(2+) as cofactor.

The enzyme catalyses a tRNA precursor + 2 CTP + ATP = a tRNA with a 3' CCA end + 3 diphosphate. It carries out the reaction a tRNA with a 3' CCA end + 2 CTP + ATP = a tRNA with a 3' CCACCA end + 3 diphosphate. Functionally, catalyzes the addition and repair of the essential 3'-terminal CCA sequence in tRNAs without using a nucleic acid template. Adds these three nucleotides in the order of C, C, and A to the tRNA nucleotide-73, using CTP and ATP as substrates and producing inorganic pyrophosphate. tRNA 3'-terminal CCA addition is required both for tRNA processing and repair. Also involved in tRNA surveillance by mediating tandem CCA addition to generate a CCACCA at the 3' terminus of unstable tRNAs. While stable tRNAs receive only 3'-terminal CCA, unstable tRNAs are marked with CCACCA and rapidly degraded. This Enterobacter sp. (strain 638) protein is Multifunctional CCA protein.